The following is a 160-amino-acid chain: Cyclic pyranopterin monophosphate synthase (160 aa).

Substrate contacts are provided by residues Met-77 to His-79 and Met-114 to Glu-115. The active site involves Asp-129.

This sequence belongs to the MoaC family. Homohexamer; trimer of dimers.

The enzyme catalyses (8S)-3',8-cyclo-7,8-dihydroguanosine 5'-triphosphate = cyclic pyranopterin phosphate + diphosphate. It participates in cofactor biosynthesis; molybdopterin biosynthesis. Functionally, catalyzes the conversion of (8S)-3',8-cyclo-7,8-dihydroguanosine 5'-triphosphate to cyclic pyranopterin monophosphate (cPMP). The chain is Cyclic pyranopterin monophosphate synthase from Listeria innocua serovar 6a (strain ATCC BAA-680 / CLIP 11262).